A 236-amino-acid polypeptide reads, in one-letter code: 2-C-methyl-D-erythritol 4-phosphate cytidylyltransferase (236 aa).

Belongs to the IspD/TarI cytidylyltransferase family. IspD subfamily. In terms of assembly, homodimer.

The enzyme catalyses 2-C-methyl-D-erythritol 4-phosphate + CTP + H(+) = 4-CDP-2-C-methyl-D-erythritol + diphosphate. It functions in the pathway isoprenoid biosynthesis; isopentenyl diphosphate biosynthesis via DXP pathway; isopentenyl diphosphate from 1-deoxy-D-xylulose 5-phosphate: step 2/6. In terms of biological role, catalyzes the formation of 4-diphosphocytidyl-2-C-methyl-D-erythritol from CTP and 2-C-methyl-D-erythritol 4-phosphate (MEP). The polypeptide is 2-C-methyl-D-erythritol 4-phosphate cytidylyltransferase (Buchnera aphidicola subsp. Schizaphis graminum (strain Sg)).